A 296-amino-acid chain; its full sequence is 4-hydroxy-tetrahydrodipicolinate synthase (296 aa).

A pyruvate-binding site is contributed by T44. Residue Y132 is the Proton donor/acceptor of the active site. K162 acts as the Schiff-base intermediate with substrate in catalysis. I204 is a binding site for pyruvate.

The protein belongs to the DapA family. Homotetramer; dimer of dimers.

It localises to the cytoplasm. It catalyses the reaction L-aspartate 4-semialdehyde + pyruvate = (2S,4S)-4-hydroxy-2,3,4,5-tetrahydrodipicolinate + H2O + H(+). The protein operates within amino-acid biosynthesis; L-lysine biosynthesis via DAP pathway; (S)-tetrahydrodipicolinate from L-aspartate: step 3/4. Functionally, catalyzes the condensation of (S)-aspartate-beta-semialdehyde [(S)-ASA] and pyruvate to 4-hydroxy-tetrahydrodipicolinate (HTPA). The protein is 4-hydroxy-tetrahydrodipicolinate synthase of Novosphingobium aromaticivorans (strain ATCC 700278 / DSM 12444 / CCUG 56034 / CIP 105152 / NBRC 16084 / F199).